Reading from the N-terminus, the 269-residue chain is 3-ketodihydrosphingosine reductase (269 aa).

Residues Gly-10, Ser-12, Ser-13, Gly-14, Lys-36, and Asp-50 each coordinate NADPH. The GXSXG motif lies at 10–14 (GASSG). Ser-12 functions as the Nucleophile; for lipase activity in the catalytic mechanism. Ser-128 acts as the Proton donor in catalysis. Catalysis depends on Tyr-142, which acts as the Proton acceptor. The NADP(+) site is built by Tyr-142 and Lys-146. Residues 142–146 (YSASK) and 175–177 (FNT) contribute to the NADPH site. Residue Lys-146 is part of the active site. Residue Lys-146 is the Lowers pKa of active site Tyr of the active site.

Belongs to the short-chain dehydrogenases/reductases (SDR) family.

It catalyses the reaction sphinganine + NADP(+) = 3-oxosphinganine + NADPH + H(+). It functions in the pathway lipid metabolism; sphingolipid metabolism. Catalyzes the reduction of 3'-oxosphinganine (3-ketodihydrosphingosine/KDS) to sphinganine (dihydrosphingosine/DHS), the second step of de novo sphingolipid biosynthesis. This Bacteroides thetaiotaomicron (strain ATCC 29148 / DSM 2079 / JCM 5827 / CCUG 10774 / NCTC 10582 / VPI-5482 / E50) protein is 3-ketodihydrosphingosine reductase.